The sequence spans 590 residues: MVHVSSSHGAKDGSEEAYDYRGNPPDKSKTGGWLGAGLILGSELSERICVMGISMNLVTYLVGDLHISSAKSATIVTNFMGTLNLLGLLGGFLADAKLGRYKMVAISASVTALGVLLLTVATTISSMRPPICDDFRRLHHQCIEANGHQLALLYVALYTIALGGGGIKSNVSGFGSDQFDTSDPKEEKQMIFFFNRFYFSISVGSLFAVIALVYVQDNVGRGWGYGISAATMVVAAIVLLCGTKRYRFKKPKGSPFTTIWRVGFLAWKKRKESYPAHPSLLNGYDNTTVPHTEMLKCLDKAAISKNESSPSSKDFEEKDPWIVSTVTQVEEVKLVMKLVPIWATNILFWTIYSQMTTFTVEQATFMDRKLGSFTVPAGSYSAFLILTILLFTSLNERVFVPLTRRLTKKPQGITSLQRIGVGLVFSMAAMAVAAVIENARREAAVNNDKKISAFWLVPQYFLVGAGEAFAYVGQLEFFIREAPERMKSMSTGLFLSTISMGFFVSSLLVSLVDRVTDKSWLRSNLNKARLNYFYWLLVVLGALNFLIFIVFAMKHQYKADVITVVVTDDDSVEKEVTKKESSEFELKDIP.

The disordered stretch occupies residues 1-24; that stretch reads MVHVSSSHGAKDGSEEAYDYRGNP. Transmembrane regions (helical) follow at residues 48–68, 73–93, 104–124, 147–167, 197–217, 222–242, 332–352, 371–391, 419–439, 453–473, 492–512, and 533–553; these read ICVM…LHIS, ATIV…GGFL, VAIS…ATTI, GHQL…GGGI, FYFS…YVQD, GWGY…LLCG, VKLV…WTIY, GSFT…ILLF, IGVG…IENA, AFWL…AYVG, GLFL…VSLV, and FYWL…VFAM.

The protein belongs to the major facilitator superfamily. Proton-dependent oligopeptide transporter (POT/PTR) (TC 2.A.17) family. As to expression, expressed in leaves, flowers and siliques. Detected in leaves.

Its subcellular location is the membrane. Functionally, low-affinity nitrate transporter. The protein is Protein NRT1/ PTR FAMILY 6.4 (NPF6.4) of Arabidopsis thaliana (Mouse-ear cress).